Here is a 257-residue protein sequence, read N- to C-terminus: MVLIRVLVNFLILQLSYAQKSSELVIGGDECNINEHRFLALLYSERFQCGGTLINEEWVLTAAHCDMRNMYIYLGVHNVSVQYDDEQRRYPKKKYFRLSSRNYNQWDKDIMLIRLNRPLRNSAHIAPLSLPSNPPSVGSVCRIMGWGTITSPQVTFPDVLHCANINIFDYEVCRAAYPELPATRRTLCAGILEGGKDSCNGDSGGPLICNGQFQGIAYWGADTCAQPREPGLYTKVFDYIDWIQSIIAGNTAVTCPP.

Residues 1–18 (MVLIRVLVNFLILQLSYA) form the signal peptide. The propeptide occupies 19 to 24 (QKSSEL). The Peptidase S1 domain maps to 25-248 (VIGGDECNIN…YIDWIQSIIA (224 aa)). 5 disulfides stabilise this stretch: C31-C162, C49-C65, C141-C209, C173-C188, and C199-C224. H64 acts as the Charge relay system in catalysis. N-linked (GlcNAc...) asparagine glycosylation is present at N78. D109 (charge relay system) is an active-site residue. S203 serves as the catalytic Charge relay system.

Belongs to the peptidase S1 family. Snake venom subfamily. Monomer. Expressed by the venom gland.

The protein localises to the secreted. In terms of biological role, snake venom serine protease that may act in the hemostasis system of the prey. This Gloydius brevicauda (Korean slamosa snake) protein is Snake venom serine protease salmonase.